Consider the following 291-residue polypeptide: Nucleotide-binding protein LGAS_1315 (291 aa).

Position 13-20 (13-20) interacts with ATP; the sequence is GMSGAGKT. GTP is bound at residue 63–66; it reads DLRV.

Belongs to the RapZ-like family.

Its function is as follows. Displays ATPase and GTPase activities. The protein is Nucleotide-binding protein LGAS_1315 of Lactobacillus gasseri (strain ATCC 33323 / DSM 20243 / BCRC 14619 / CIP 102991 / JCM 1131 / KCTC 3163 / NCIMB 11718 / NCTC 13722 / AM63).